The chain runs to 1098 residues: Contactin-5 (1098 aa).

The N-terminal stretch at 1-23 (MASCWRLILFLSVTRWLSDYSEA) is a signal peptide. 6 Ig-like C2-type domains span residues 98–189 (PVFV…ATLQ), 195–281 (NFSG…RVLS), 299–384 (PKIE…GQLQ), 389–473 (PHWV…AELK), 479–568 (PSFE…LSVK), and 570–659 (PTRI…DSVS). Cysteine 122 and cysteine 172 form a disulfide bridge. 2 N-linked (GlcNAc...) asparagine glycosylation sites follow: asparagine 137 and asparagine 195. Disulfide bonds link cysteine 216–cysteine 268 and cysteine 321–cysteine 368. 3 N-linked (GlcNAc...) asparagine glycosylation sites follow: asparagine 396, asparagine 448, and asparagine 539. 3 cysteine pairs are disulfide-bonded: cysteine 410–cysteine 457, cysteine 502–cysteine 550, and cysteine 592–cysteine 649. 4 consecutive Fibronectin type-III domains span residues 672–770 (PPGV…TNEA), 775–872 (APSN…SAEG), 877–971 (APTD…TKRH), and 976–1066 (PPGN…SYSG). 3 N-linked (GlcNAc...) asparagine glycosylation sites follow: asparagine 778, asparagine 815, and asparagine 930. Residues 956–982 (GYGPPSREASTTTKRHPPREPPGNLRW) form a disordered region. Asparagine 1001 carries an N-linked (GlcNAc...) asparagine glycan. Serine 1071 carries the GPI-anchor amidated serine lipid modification. Residues 1072–1098 (AQSTLHSLSKWSSVTLLLALMLPSSSW) constitute a propeptide, removed in mature form.

Belongs to the immunoglobulin superfamily. Contactin family. As to quaternary structure, interacts with PTPRG. As to expression, expressed in the nervous system. Preferentially expressed in the central auditory pathways.

It is found in the cell membrane. Contactins mediate cell surface interactions during nervous system development. Has some neurite outgrowth-promoting activity in the cerebral cortical neurons but not in hippocampal neurons. Involved in neuronal activity in the auditory system. This Mus musculus (Mouse) protein is Contactin-5 (Cntn5).